We begin with the raw amino-acid sequence, 201 residues long: Glycerol-3-phosphate acyltransferase (201 aa).

The next 5 membrane-spanning stretches (helical) occupy residues Ala-10–Ile-30, Pro-59–Ala-79, Ala-87–Phe-107, Phe-116–Leu-136, and Ile-161–Ile-181.

This sequence belongs to the PlsY family. In terms of assembly, probably interacts with PlsX.

Its subcellular location is the cell inner membrane. The catalysed reaction is an acyl phosphate + sn-glycerol 3-phosphate = a 1-acyl-sn-glycero-3-phosphate + phosphate. It functions in the pathway lipid metabolism; phospholipid metabolism. Its function is as follows. Catalyzes the transfer of an acyl group from acyl-phosphate (acyl-PO(4)) to glycerol-3-phosphate (G3P) to form lysophosphatidic acid (LPA). This enzyme utilizes acyl-phosphate as fatty acyl donor, but not acyl-CoA or acyl-ACP. This Cereibacter sphaeroides (strain ATCC 17029 / ATH 2.4.9) (Rhodobacter sphaeroides) protein is Glycerol-3-phosphate acyltransferase.